The primary structure comprises 180 residues: Probable chorismate pyruvate-lyase (180 aa).

3 residues coordinate substrate: Arg82, Leu120, and Glu165.

This sequence belongs to the UbiC family.

It localises to the cytoplasm. It carries out the reaction chorismate = 4-hydroxybenzoate + pyruvate. It functions in the pathway cofactor biosynthesis; ubiquinone biosynthesis. In terms of biological role, removes the pyruvyl group from chorismate, with concomitant aromatization of the ring, to provide 4-hydroxybenzoate (4HB) for the ubiquinone pathway. The polypeptide is Probable chorismate pyruvate-lyase (Photobacterium profundum (strain SS9)).